Here is a 444-residue protein sequence, read N- to C-terminus: Glycine receptor subunit alphaZ1 (444 aa).

The signal sequence occupies residues 1-24 (MFALGIYLWETIVFFSLAASQQAA). The Extracellular segment spans residues 25–246 (ARKAASPMPP…RFHLERQMGY (222 aa)). N-linked (GlcNAc...) asparagine glycosylation occurs at N62. Residues R89 and S153 each contribute to the glycine site. An intrachain disulfide couples C162 to C176. Residues E216 and D218 each coordinate Zn(2+). C222 and C233 form a disulfide bridge. A strychnine-binding site is contributed by 226–231 (YNTGKF). A glycine-binding site is contributed by T228. H239 serves as a coordination point for Zn(2+). A helical transmembrane segment spans residues 247 to 268 (YLIQMYIPSLLIVILSWVSFWI). Topologically, residues 269-273 (NMDAA) are cytoplasmic. A helical membrane pass occupies residues 274 to 294 (PARVGLGITTVLTMTTQSSGS). At 295 to 305 (RASLPKVSYVK) the chain is on the extracellular side. A helical membrane pass occupies residues 306–326 (AIDIWMAVCLLFVFSALLEYA). At 327 to 412 (AVNFIARQHK…FISRAKRIDT (86 aa)) the chain is on the cytoplasmic side. Residues 413–433 (VSRVAFPLVFLIFNIFYWITY) form a helical membrane-spanning segment. Topologically, residues 434 to 444 (KIIRSEDIHKQ) are extracellular.

It belongs to the ligand-gated ion channel (TC 1.A.9) family. Glycine receptor (TC 1.A.9.3) subfamily. GLRA1 sub-subfamily. Homopentamer (in vitro). Heteropentamer composed of glra1 and glrb. Both homopentamers and heteropentamers form functional ion channels. Interacts with glrb. In terms of tissue distribution, expressed in brain.

It is found in the postsynaptic cell membrane. The protein resides in the synapse. It localises to the perikaryon. Its subcellular location is the cell projection. The protein localises to the dendrite. It is found in the cell membrane. The enzyme catalyses chloride(in) = chloride(out). Its activity is regulated as follows. Activated by glycine and taurine. Inhibited by strychnine. Allosterically activated by ivermectin. Inhibited by picrotoxinin. Strychnine binding locks the channel in a closed conformation and prevents channel opening in response to extracellular glycine. Can also be activated by GABA and inhibited by bicuculline, but this requires heterologous expression in human cells. Functionally, subunit of heteromeric glycine-gated chloride channels. Plays an important role in the down-regulation of neuronal excitability. Contributes to the generation of inhibitory postsynaptic currents. Channel activity is potentiated by ethanol. In Danio rerio (Zebrafish), this protein is Glycine receptor subunit alphaZ1 (glra1).